The following is a 175-amino-acid chain: MTIKLNELRDNNGARKGRMRVGRGIGSGKGKTAGRGQKGQKARSGVAINGFEGGQMPLHMRIPKRGFNNIFGKDFAIVNLGMVQKLIDAKKLDAKATIDHAALKAAGVARGGKDGVRLLAKGELTAKVTFAVAGASKGAIEAVEKAGGKVELPEARPEGDGKKATRKAEAAAKNA.

A compositionally biased stretch (basic and acidic residues) spans 1 to 13 (MTIKLNELRDNNG). Disordered stretches follow at residues 1 to 44 (MTIK…KARS) and 150 to 175 (VELP…AKNA). Over residues 23–37 (RGIGSGKGKTAGRGQ) the composition is skewed to gly residues.

This sequence belongs to the universal ribosomal protein uL15 family. As to quaternary structure, part of the 50S ribosomal subunit.

Binds to the 23S rRNA. The chain is Large ribosomal subunit protein uL15 from Sphingopyxis alaskensis (strain DSM 13593 / LMG 18877 / RB2256) (Sphingomonas alaskensis).